The primary structure comprises 432 residues: Succinate--CoA ligase [GDP-forming] subunit beta, mitochondrial (432 aa).

Residues methionine 1–tryptophan 37 constitute a mitochondrion transit peptide. Positions lysine 46–phenylalanine 274 constitute an ATP-grasp domain. Glutamine 57 lines the GTP pocket. The residue at position 73 (lysine 73) is an N6-acetyllysine. An N6-succinyllysine modification is found at lysine 78. Glycine 90–glycine 92 contacts GTP. Lysine 132 and lysine 139 each carry N6-acetyllysine. Leucine 146 contributes to the GTP binding site. Phosphoserine is present on serine 161. Residues lysine 200, lysine 218, and lysine 227 each carry the N6-acetyllysine modification. Mg(2+)-binding residues include asparagine 243 and aspartate 257. An N6-acetyllysine mark is found at lysine 271 and lysine 291. Asparagine 308 is a binding site for substrate. Residue lysine 338 is modified to N6-succinyllysine. An N6-acetyllysine modification is found at lysine 347. Glycine 365–valine 367 is a substrate binding site. N6-acetyllysine occurs at positions 386 and 423.

This sequence belongs to the succinate/malate CoA ligase beta subunit family. GTP-specific subunit beta subfamily. In terms of assembly, heterodimer of an alpha and a beta subunit. The beta subunit determines specificity for GTP. The cofactor is Mg(2+). Mainly expressed in liver, kidney, heart, spleen and skeletal muscle. Also found in intestine and colon, and in low amounts in lung, brain, prostate, testis and ovary.

Its subcellular location is the mitochondrion. The catalysed reaction is GTP + succinate + CoA = succinyl-CoA + GDP + phosphate. The protein operates within carbohydrate metabolism; tricarboxylic acid cycle; succinate from succinyl-CoA (ligase route): step 1/1. Functionally, GTP-specific succinyl-CoA synthetase functions in the citric acid cycle (TCA), coupling the hydrolysis of succinyl-CoA to the synthesis of GTP and thus represents the only step of substrate-level phosphorylation in the TCA. The beta subunit provides nucleotide specificity of the enzyme and binds the substrate succinate, while the binding sites for coenzyme A and phosphate are found in the alpha subunit. The protein is Succinate--CoA ligase [GDP-forming] subunit beta, mitochondrial of Homo sapiens (Human).